We begin with the raw amino-acid sequence, 510 residues long: Ankyrin repeat domain-containing protein 13C-A (510 aa).

The span at 1–19 (MTGEKIRSLHKDQKPSKDE) shows a compositional bias: basic and acidic residues. The disordered stretch occupies residues 1–35 (MTGEKIRSLHKDQKPSKDEDLLEPDEEATAGGTFT). ANK repeat units follow at residues 80 to 111 (DVYF…QKDS), 112 to 141 (HGNT…PVKV), and 145 to 174 (QGWS…QQSR).

Its subcellular location is the endoplasmic reticulum membrane. Its function is as follows. Acts as a molecular chaperone for G protein-coupled receptors, regulating their biogenesis and exit from the ER. In Xenopus laevis (African clawed frog), this protein is Ankyrin repeat domain-containing protein 13C-A (ankrd13c-a).